A 466-amino-acid chain; its full sequence is Ribulose bisphosphate carboxylase large chain (466 aa).

The residue at position 5 (Lys-5) is an N6,N6,N6-trimethyllysine. The substrate site is built by Asn-114 and Thr-164. The Proton acceptor role is filled by Lys-166. Substrate is bound at residue Lys-168. Residues Lys-192, Asp-194, and Glu-195 each contribute to the Mg(2+) site. N6-carboxylysine is present on Lys-192. The active-site Proton acceptor is His-285. Substrate contacts are provided by Arg-286, His-318, and Ser-370.

Belongs to the RuBisCO large chain family. Type I subfamily. In terms of assembly, heterohexadecamer of 8 large chains and 8 small chains; disulfide-linked. The disulfide link is formed within the large subunit homodimers. Requires Mg(2+) as cofactor. Post-translationally, the disulfide bond which can form in the large chain dimeric partners within the hexadecamer appears to be associated with oxidative stress and protein turnover.

It localises to the plastid. Its subcellular location is the chloroplast. The enzyme catalyses 2 (2R)-3-phosphoglycerate + 2 H(+) = D-ribulose 1,5-bisphosphate + CO2 + H2O. It catalyses the reaction D-ribulose 1,5-bisphosphate + O2 = 2-phosphoglycolate + (2R)-3-phosphoglycerate + 2 H(+). RuBisCO catalyzes two reactions: the carboxylation of D-ribulose 1,5-bisphosphate, the primary event in carbon dioxide fixation, as well as the oxidative fragmentation of the pentose substrate in the photorespiration process. Both reactions occur simultaneously and in competition at the same active site. The sequence is that of Ribulose bisphosphate carboxylase large chain from Coriaria myrtifolia (Tanner's sumac).